The sequence spans 295 residues: MSNLKDIKRKIKSVQNTQKTTKAMKLVSTAKLKKAEEAARHSRVYALKINEVLSEIAYKINQFKIVGKDDKFFDLKASINKVDIIFVTADKGLCGGFNISTIKTIRNMIEEYKSKKIKVRLRAVGKKGIEFFNFQGVEILESYKGISSAPTYDKAKGVIASAISDFVAGATDKVILVHNGYKNMISQEIRINTIVPVETPSIENVEHSSSLMEIEPENDEKILEELMKKYFEYSMYYALIDSLAAEHSARMQAMDNATNNAKARVKELQLAYNKARQESITTELIEIISGVESMK.

The protein belongs to the ATPase gamma chain family. As to quaternary structure, F-type ATPases have 2 components, CF(1) - the catalytic core - and CF(0) - the membrane proton channel. CF(1) has five subunits: alpha(3), beta(3), gamma(1), delta(1), epsilon(1). CF(0) has three main subunits: a, b and c.

The protein localises to the cell inner membrane. Its function is as follows. Produces ATP from ADP in the presence of a proton gradient across the membrane. The gamma chain is believed to be important in regulating ATPase activity and the flow of protons through the CF(0) complex. The sequence is that of ATP synthase gamma chain from Campylobacter fetus subsp. fetus (strain 82-40).